The primary structure comprises 224 residues: Deoxyribose-phosphate aldolase (224 aa).

Residue Asp94 is the Proton donor/acceptor of the active site. Lys158 serves as the catalytic Schiff-base intermediate with acetaldehyde. The Proton donor/acceptor role is filled by Lys187.

The protein belongs to the DeoC/FbaB aldolase family. DeoC type 1 subfamily. Homodimer.

The protein localises to the cytoplasm. It catalyses the reaction 2-deoxy-D-ribose 5-phosphate = D-glyceraldehyde 3-phosphate + acetaldehyde. With respect to regulation, activated by citrate. Inhibited by NaBH(4). Activity is independent of divalent metal cations. Catalyzes a reversible aldol reaction between acetaldehyde and D-glyceraldehyde 3-phosphate to generate 2-deoxy-D-ribose 5-phosphate. Could be involved in pentose biosynthesis. In Thermococcus kodakarensis (strain ATCC BAA-918 / JCM 12380 / KOD1) (Pyrococcus kodakaraensis (strain KOD1)), this protein is Deoxyribose-phosphate aldolase.